A 597-amino-acid chain; its full sequence is Gamma-terpinene synthase, chloroplastic (597 aa).

The N-terminal 47 residues, 1–47 (MATLSMQVSILSKQVKNLNSFGMRASKLPMVARRVDVSTTRLRPICS), are a transit peptide targeting the chloroplast. Asp-350 and Asp-354 together coordinate Mn(2+). The DDXXD motif motif lies at 350 to 354 (DDVYD). Homodimerization stretches follow at residues 356–362 (YGTLDEL) and 428–465 (EAKWYYAGYTPTLAEYLENAKVSISSPTIISQVYFTLP). The Mn(2+) site is built by Asp-494 and Glu-502.

Belongs to the terpene synthase family. As to quaternary structure, homodimer. Mn(2+) serves as cofactor. It depends on Mg(2+) as a cofactor.

It is found in the plastid. It localises to the chloroplast. The catalysed reaction is (2E)-geranyl diphosphate = gamma-terpinene + diphosphate. The protein operates within secondary metabolite biosynthesis; terpenoid biosynthesis. Functionally, involved in the biosynthesis of phenolic monoterpenes natural products thymol and carvacrol which have a broad range of biological activities acting as antimicrobial compounds, insecticides, antioxidants and pharmaceutical agents. Monoterpene synthase which catalyzes the conversion of geranyl diphosphate (GPP) to gamma-terpinene and minor amounts of other monoterpenes (e.g. alpha-thujene, alpha-terpinene, myrcene, sabinene, (+)-R-limonene, alpha-pinene and alpha-phellandrene). This is Gamma-terpinene synthase, chloroplastic from Thymus caespititius (Cretan thyme).